The primary structure comprises 542 residues: Carboxypeptidase Y (542 aa).

Positions 1-21 (MKLSKSTLIATLALTATSTNA) are cleaved as a signal peptide. The propeptide occupies 22–127 (LVVQNPFSNI…DAQVPNHKLR (106 aa)). Disulfide bonds link Cys-182–Cys-421, Cys-316–Cys-330, Cys-340–Cys-363, Cys-347–Cys-356, and Cys-385–Cys-391. The N-linked (GlcNAc...) asparagine glycan is linked to Asn-213. Ser-269 is an active-site residue. Asn-291 is a glycosylation site (N-linked (GlcNAc...) asparagine). The active site involves Asp-461. Cys-464 serves as a coordination point for substrate. The active site involves His-518. Met-519 serves as a coordination point for substrate.

Belongs to the peptidase S10 family.

The protein localises to the vacuole. The enzyme catalyses Release of a C-terminal amino acid with broad specificity.. In terms of biological role, involved in degradation of small peptides. This is Carboxypeptidase Y (CPY1) from Candida albicans (Yeast).